The primary structure comprises 223 residues: Probable GTP-binding protein EngB (223 aa).

The EngB-type G domain maps to 49 to 223; the sequence is MGVEIAFAGR…LRAALAGLTD (175 aa). Residues 57-64, 84-88, 102-105, 169-172, and 203-205 contribute to the GTP site; these read GRSNVGKS, GRTKQ, DMPG, TKAD, and TSS. Residues S64 and T86 each coordinate Mg(2+).

The protein belongs to the TRAFAC class TrmE-Era-EngA-EngB-Septin-like GTPase superfamily. EngB GTPase family. The cofactor is Mg(2+).

Necessary for normal cell division and for the maintenance of normal septation. This is Probable GTP-binding protein EngB from Granulibacter bethesdensis (strain ATCC BAA-1260 / CGDNIH1).